The following is an 87-amino-acid chain: Large ribosomal subunit protein bL31B (87 aa).

It belongs to the bacterial ribosomal protein bL31 family. Type B subfamily. In terms of assembly, part of the 50S ribosomal subunit.

This chain is Large ribosomal subunit protein bL31B, found in Burkholderia ambifaria (strain MC40-6).